The chain runs to 436 residues: uncharacterized protein (436 aa).

Positions 1 to 18 (MMKRFVALSMAIFSLSFA) are cleaved as a signal peptide.

This is an uncharacterized protein from Aquifex aeolicus (strain VF5).